Consider the following 222-residue polypeptide: Transmembrane reductase CYB561D2 (222 aa).

Over 2-17 (ALSVETESHIYRALRT) the chain is Cytoplasmic. Residues 14-217 (ALRTVSGAAA…NQVSNAYLYR (204 aa)) form the Cytochrome b561 domain. A helical transmembrane segment spans residues 18–38 (VSGAAAHLVALGFTIFVAVLA). Topologically, residues 39 to 46 (RPGSSLFS) are lumenal. A helical membrane pass occupies residues 47 to 67 (WHPVLMSLAFSFLMTEALLVF). His48 serves as a coordination point for heme b. Residues 68 to 85 (SPESSLLRSLSRKGRARC) are Cytoplasmic-facing. His86 and His120 together coordinate heme b. A helical membrane pass occupies residues 86 to 106 (HWVLQLLALLCALLGLGLVIL). Over 107-122 (HKEQLGKAHLATWHGR) the chain is Lumenal. Residues 123–143 (AGLLAVLWAGLQCSGGVGLLY) traverse the membrane as a helical segment. The Cytoplasmic portion of the chain corresponds to 144 to 162 (PKLLPRWPLAKLKLYHATS). His159 is a heme b binding site. Residues 163 to 183 (GLVGYLLGGASLLLGMCSLWF) traverse the membrane as a helical segment. Residues 184-186 (TAT) lie on the Lumenal side of the membrane. A helical transmembrane segment spans residues 187-207 (VTGGVWYLAVLCPVITSLVIM). Residues 208–222 (NQVSNAYLYRKRIQP) lie on the Cytoplasmic side of the membrane.

The cofactor is heme b.

It localises to the endoplasmic reticulum membrane. The protein resides in the cytoplasmic vesicle membrane. It carries out the reaction monodehydro-L-ascorbate radical(out) + L-ascorbate(in) = monodehydro-L-ascorbate radical(in) + L-ascorbate(out). The catalysed reaction is Fe(3+)(out) + L-ascorbate(in) = monodehydro-L-ascorbate radical(in) + Fe(2+)(out) + H(+). Its function is as follows. Transmembrane reductase that may use ascorbate as an electron donor in the cytoplasm and transfer electrons across endoplasmic reticulum membranes to reduce monodehydro-L-ascorbate radical and iron cations Fe(3+) in the lumen of that compartment. In Bos taurus (Bovine), this protein is Transmembrane reductase CYB561D2.